Here is a 553-residue protein sequence, read N- to C-terminus: Pseudouridylate synthase RPUSD2 (553 aa).

Residues 76–135 (AVGKQVPESGDQAQGGEGQLPSNGEQTPAPVADSGKRKKRRGATGERVVPPPKKRRTGVS) form a disordered region. Asp-287 is a catalytic residue. Thr-490 is modified (phosphothreonine).

This sequence belongs to the pseudouridine synthase RluA family.

It catalyses the reaction a uridine in mRNA = a pseudouridine in mRNA. Functionally, pseudouridine synthase that catalyzes pseudouridylation of mRNAs. This is Pseudouridylate synthase RPUSD2 from Mus musculus (Mouse).